Consider the following 315-residue polypeptide: Cobalamin biosynthesis protein CobD (315 aa).

The next 7 helical transmembrane spans lie at methionine 1–proline 21, valine 50–isoleucine 70, valine 79–histidine 99, aspartate 151–tyrosine 171, valine 209–isoleucine 229, alanine 250–valine 270, and isoleucine 291–phenylalanine 311.

The protein belongs to the CobD/CbiB family.

The protein resides in the cell membrane. It functions in the pathway cofactor biosynthesis; adenosylcobalamin biosynthesis. Converts cobyric acid to cobinamide by the addition of aminopropanol on the F carboxylic group. The protein is Cobalamin biosynthesis protein CobD of Clostridium acetobutylicum (strain ATCC 824 / DSM 792 / JCM 1419 / IAM 19013 / LMG 5710 / NBRC 13948 / NRRL B-527 / VKM B-1787 / 2291 / W).